We begin with the raw amino-acid sequence, 820 residues long: DNA mismatch repair protein MutS (820 aa).

618–625 (GPNMAGKS) lines the ATP pocket.

The protein belongs to the DNA mismatch repair MutS family.

This protein is involved in the repair of mismatches in DNA. It is possible that it carries out the mismatch recognition step. This protein has a weak ATPase activity. In Chlamydia trachomatis serovar L2b (strain UCH-1/proctitis), this protein is DNA mismatch repair protein MutS.